We begin with the raw amino-acid sequence, 190 residues long: Protein shisa-like-2A (190 aa).

The next 2 membrane-spanning stretches (helical) occupy residues 48-68 (SFFP…LIGL) and 70-90 (VAAV…YLFI).

It belongs to the shisa family.

Its subcellular location is the membrane. The chain is Protein shisa-like-2A from Homo sapiens (Human).